We begin with the raw amino-acid sequence, 357 residues long: tRNA-specific 2-thiouridylase MnmA (357 aa).

ATP-binding positions include 7–14 (GMSGGVDS) and M33. Residue C103 is the Nucleophile of the active site. An intrachain disulfide couples C103 to C200. G127 contacts ATP. The interaction with tRNA stretch occupies residues 150–152 (KDQ). The Cysteine persulfide intermediate role is filled by C200. Positions 306 to 307 (RY) are interaction with tRNA.

Belongs to the MnmA/TRMU family.

Its subcellular location is the cytoplasm. The catalysed reaction is S-sulfanyl-L-cysteinyl-[protein] + uridine(34) in tRNA + AH2 + ATP = 2-thiouridine(34) in tRNA + L-cysteinyl-[protein] + A + AMP + diphosphate + H(+). Its function is as follows. Catalyzes the 2-thiolation of uridine at the wobble position (U34) of tRNA, leading to the formation of s(2)U34. This Lachnoclostridium phytofermentans (strain ATCC 700394 / DSM 18823 / ISDg) (Clostridium phytofermentans) protein is tRNA-specific 2-thiouridylase MnmA.